The chain runs to 55 residues: Large ribosomal subunit protein bL33 (55 aa).

It belongs to the bacterial ribosomal protein bL33 family.

This chain is Large ribosomal subunit protein bL33, found in Xanthomonas axonopodis pv. citri (strain 306).